The following is a 101-amino-acid chain: uncharacterized protein (101 aa).

The signal sequence occupies residues 1-27 (MQLTGSIYPWFTAYALLKSTLMELINS). 2 helical membrane-spanning segments follow: residues 42–64 (LVPY…AISF) and 79–98 (TFVF…NTFL).

It localises to the cytoplasm. It is found in the nucleus membrane. This is an uncharacterized protein from Schizosaccharomyces pombe (strain 972 / ATCC 24843) (Fission yeast).